The primary structure comprises 141 residues: Hemoglobin subunit alpha (141 aa).

The Globin domain maps to 1–141 (VLSPADKKNV…VSTVLTSKYR (141 aa)). Residue S3 is modified to Phosphoserine. K7 and K11 each carry N6-succinyllysine. The residue at position 16 (K16) is an N6-acetyllysine; alternate. K16 bears the N6-succinyllysine; alternate mark. The residue at position 24 (Y24) is a Phosphotyrosine. At S35 the chain carries Phosphoserine. K40 is subject to N6-succinyllysine. Phosphoserine is present on S49. O2 is bound at residue H58. H87 contacts heme b. S102 is subject to Phosphoserine. T108 is modified (phosphothreonine). Residues S124 and S131 each carry the phosphoserine modification. T134 and T137 each carry phosphothreonine. The residue at position 138 (S138) is a Phosphoserine.

Belongs to the globin family. As to quaternary structure, heterotetramer of two alpha chains and two beta chains. As to expression, red blood cells.

Involved in oxygen transport from the lung to the various peripheral tissues. Its function is as follows. Hemopressin acts as an antagonist peptide of the cannabinoid receptor CNR1. Hemopressin-binding efficiently blocks cannabinoid receptor CNR1 and subsequent signaling. In Spermophilus citellus (European ground squirrel), this protein is Hemoglobin subunit alpha (HBA).